Reading from the N-terminus, the 331-residue chain is Cytochrome bo(3) ubiquinol oxidase subunit 2 (331 aa).

The N-terminal stretch at 1–23 (MTKANPFAALKWLSLAPALLLGG) is a signal peptide. Cys-24 is lipidated: N-palmitoyl cysteine. Cys-24 carries the S-diacylglycerol cysteine lipid modification. Residues 24 to 41 (CDMTLFNPKGQVGMDERT) are Periplasmic-facing. A helical transmembrane segment spans residues 42–62 (LIITATLLMLIVVIPVIVMTL). Topologically, residues 63-86 (AFAWKYRASNTQAEYKPDWHHSNR) are cytoplasmic. Residues 87 to 107 (IEAVVWLVPCVIIAILGWITW) form a helical membrane-spanning segment. Residues 108 to 331 (ESTHKLDPYR…DMHMQPSTQE (224 aa)) are Periplasmic-facing.

Belongs to the cytochrome c oxidase subunit 2 family. In terms of assembly, heterooctamer of two A chains, two B chains, two C chains and two D chains.

Its subcellular location is the cell inner membrane. Functionally, cytochrome bo(3) ubiquinol terminal oxidase is the component of the aerobic respiratory chain of E.coli that predominates when cells are grown at high aeration. Has proton pump activity across the membrane in addition to electron transfer, pumping 2 protons/electron. In Pseudomonas aeruginosa (strain ATCC 15692 / DSM 22644 / CIP 104116 / JCM 14847 / LMG 12228 / 1C / PRS 101 / PAO1), this protein is Cytochrome bo(3) ubiquinol oxidase subunit 2 (cyoA).